Consider the following 641-residue polypeptide: Phosphomethylpyrimidine synthase (641 aa).

The span at 1 to 12 shows a compositional bias: polar residues; the sequence is MTDTSTQNTATP. The tract at residues 1-25 is disordered; it reads MTDTSTQNTATPTDEYGAEIHPKHS. Residues asparagine 200, methionine 229, tyrosine 258, histidine 294, 314–316, 355–358, and glutamate 394 each bind substrate; these read SRG and DGLR. Histidine 398 contacts Zn(2+). Substrate is bound at residue tyrosine 421. Histidine 462 is a Zn(2+) binding site. Residues cysteine 542, cysteine 545, and cysteine 550 each contribute to the [4Fe-4S] cluster site.

It belongs to the ThiC family. The cofactor is [4Fe-4S] cluster.

It catalyses the reaction 5-amino-1-(5-phospho-beta-D-ribosyl)imidazole + S-adenosyl-L-methionine = 4-amino-2-methyl-5-(phosphooxymethyl)pyrimidine + CO + 5'-deoxyadenosine + formate + L-methionine + 3 H(+). It participates in cofactor biosynthesis; thiamine diphosphate biosynthesis. Its function is as follows. Catalyzes the synthesis of the hydroxymethylpyrimidine phosphate (HMP-P) moiety of thiamine from aminoimidazole ribotide (AIR) in a radical S-adenosyl-L-methionine (SAM)-dependent reaction. The polypeptide is Phosphomethylpyrimidine synthase (Corynebacterium jeikeium (strain K411)).